The sequence spans 208 residues: Large ribosomal subunit protein uL3 (208 aa).

Residues 117–149 (FQGVIKRHGQSRGPMAHGSRYHRRPGSMGPVSP) are disordered.

It belongs to the universal ribosomal protein uL3 family. In terms of assembly, part of the 50S ribosomal subunit. Forms a cluster with proteins L14 and L19.

Its function is as follows. One of the primary rRNA binding proteins, it binds directly near the 3'-end of the 23S rRNA, where it nucleates assembly of the 50S subunit. The sequence is that of Large ribosomal subunit protein uL3 from Streptococcus equi subsp. equi (strain 4047).